Here is a 366-residue protein sequence, read N- to C-terminus: ATP-dependent 6-phosphofructokinase (366 aa).

Residues glycine 16, 78-79, and 118-121 each bind ATP; these read RE and GNGT. The segment at 74-94 is disordered; that stretch reads LGTSREKPFKPDPGEKDSEAG. Basic and acidic residues predominate over residues 77 to 94; that stretch reads SREKPFKPDPGEKDSEAG. Asparagine 119 contacts Mg(2+). Residues 141–143, arginine 178, 185–187, glutamate 238, arginine 282, and 288–291 each bind substrate; these read TID, MGH, and YLQR. Residue aspartate 143 is the Proton acceptor of the active site.

It belongs to the phosphofructokinase type A (PFKA) family. Mixed-substrate PFK group III subfamily. Homodimer or homotetramer. Mg(2+) serves as cofactor.

It localises to the cytoplasm. The enzyme catalyses beta-D-fructose 6-phosphate + ATP = beta-D-fructose 1,6-bisphosphate + ADP + H(+). The protein operates within carbohydrate degradation; glycolysis; D-glyceraldehyde 3-phosphate and glycerone phosphate from D-glucose: step 3/4. Its function is as follows. Catalyzes the phosphorylation of D-fructose 6-phosphate to fructose 1,6-bisphosphate by ATP, the first committing step of glycolysis. The protein is ATP-dependent 6-phosphofructokinase of Spirochaeta thermophila (strain ATCC 49972 / DSM 6192 / RI 19.B1).